Consider the following 459-residue polypeptide: Inositol-trisphosphate 3-kinase A (459 aa).

Residues 1–29 (MTLPGRPTGMARPRGAGPCSPGLERAPRR) are disordered. Omega-N-methylarginine is present on residues arginine 35, arginine 55, and arginine 62. Residues 49-164 (AAAGEPRARG…TSEDVGQKSH (116 aa)) are disordered. Low complexity predominate over residues 116 to 132 (RRLSTSSLSSTGSSSLL). Residues serine 135 and serine 195 each carry the phosphoserine modification. ATP contacts are provided by residues serine 195, lysine 207, 247-249 (QDL), and aspartate 260. Residues lysine 262 and arginine 283 each coordinate substrate. Positions 285 to 293 (DMYKKMLAV) are calmodulin-binding. 310–317 (KPRYMQWR) serves as a coordination point for substrate. ATP contacts are provided by lysine 334 and aspartate 414. Lysine 417 contacts substrate.

This sequence belongs to the inositol phosphokinase (IPK) family.

The protein localises to the cytoplasm. The protein resides in the cytoskeleton. The catalysed reaction is 1D-myo-inositol 1,4,5-trisphosphate + ATP = 1D-myo-inositol 1,3,4,5-tetrakisphosphate + ADP + H(+). With respect to regulation, activated by calcium/calmodulin. Its function is as follows. Catalyzes the phosphorylation of 1D-myo-inositol 1,4,5-trisphosphate (InsP3) into 1D-myo-inositol 1,3,4,5-tetrakisphosphate and participates to the regulation of calcium homeostasis. The protein is Inositol-trisphosphate 3-kinase A of Mus musculus (Mouse).